The following is a 137-amino-acid chain: Peptide methionine sulfoxide reductase MsrB (137 aa).

The region spanning 7-129 (AEELKKNLSE…NSASLRFTDG (123 aa)) is the MsrB domain. Positions 46, 49, 95, and 98 each coordinate Zn(2+). Cys118 (nucleophile) is an active-site residue.

It belongs to the MsrB Met sulfoxide reductase family. The cofactor is Zn(2+).

It catalyses the reaction L-methionyl-[protein] + [thioredoxin]-disulfide + H2O = L-methionyl-(R)-S-oxide-[protein] + [thioredoxin]-dithiol. The polypeptide is Peptide methionine sulfoxide reductase MsrB (Escherichia coli O45:K1 (strain S88 / ExPEC)).